The chain runs to 188 residues: Protein GrpE (188 aa).

The interval 1–30 (MTKKTSHHKAEQKEKRAGEESGRESEVLDH) is disordered. The span at 8 to 30 (HKAEQKEKRAGEESGRESEVLDH) shows a compositional bias: basic and acidic residues.

Belongs to the GrpE family. As to quaternary structure, homodimer.

Its subcellular location is the cytoplasm. Functionally, participates actively in the response to hyperosmotic and heat shock by preventing the aggregation of stress-denatured proteins, in association with DnaK and GrpE. It is the nucleotide exchange factor for DnaK and may function as a thermosensor. Unfolded proteins bind initially to DnaJ; upon interaction with the DnaJ-bound protein, DnaK hydrolyzes its bound ATP, resulting in the formation of a stable complex. GrpE releases ADP from DnaK; ATP binding to DnaK triggers the release of the substrate protein, thus completing the reaction cycle. Several rounds of ATP-dependent interactions between DnaJ, DnaK and GrpE are required for fully efficient folding. The sequence is that of Protein GrpE from Chlorobium phaeobacteroides (strain BS1).